A 314-amino-acid chain; its full sequence is UDP-N-acetylenolpyruvoylglucosamine reductase (314 aa).

An FAD-binding PCMH-type domain is found at 31-208; it reads RIGGPADYYA…LSARFRLTPK (178 aa). The active site involves arginine 187. The active-site Proton donor is serine 237. The active site involves glutamate 307.

This sequence belongs to the MurB family. FAD serves as cofactor.

It is found in the cytoplasm. It catalyses the reaction UDP-N-acetyl-alpha-D-muramate + NADP(+) = UDP-N-acetyl-3-O-(1-carboxyvinyl)-alpha-D-glucosamine + NADPH + H(+). It participates in cell wall biogenesis; peptidoglycan biosynthesis. Functionally, cell wall formation. The sequence is that of UDP-N-acetylenolpyruvoylglucosamine reductase from Agathobacter rectalis (strain ATCC 33656 / DSM 3377 / JCM 17463 / KCTC 5835 / VPI 0990) (Eubacterium rectale).